The chain runs to 921 residues: GPI ethanolamine phosphate transferase 1 (921 aa).

Topologically, residues M1 to L9 are cytoplasmic. The helical transmembrane segment at I10–I30 threads the bilayer. Topologically, residues S31 to T457 are lumenal. N-linked (GlcNAc...) asparagine glycans are attached at residues N90, N138, N198, N262, and N286. A helical transmembrane segment spans residues I458–F478. Residues I479–P488 are Cytoplasmic-facing. Residues S489–Y509 traverse the membrane as a helical segment. Topologically, residues Q510–F516 are lumenal. Residues Y517–I537 traverse the membrane as a helical segment. At R538 to E552 the chain is on the cytoplasmic side. The chain crosses the membrane as a helical span at residues S553–H573. Residues R574–W575 are Lumenal-facing. A helical transmembrane segment spans residues I576–L596. The Cytoplasmic segment spans residues F597–N599. A helical membrane pass occupies residues L600–I620. Position 621 (E621) is a topological domain, lumenal. A helical membrane pass occupies residues N622–M642. Over R643 to H654 the chain is Cytoplasmic. The chain crosses the membrane as a helical span at residues L655–I675. Topologically, residues S676–P684 are lumenal. Residues A685–L705 form a helical membrane-spanning segment. Residues H706–S728 are Cytoplasmic-facing. The helical transmembrane segment at F729–V749 threads the bilayer. Residues Q750–V777 are Lumenal-facing. Residues A778–I798 traverse the membrane as a helical segment. Residues S799–G819 lie on the Cytoplasmic side of the membrane. The helical transmembrane segment at A820–M840 threads the bilayer. The Lumenal portion of the chain corresponds to N841–Y849. The chain crosses the membrane as a helical span at residues T850–L870. The Cytoplasmic portion of the chain corresponds to K871–D878. The helical transmembrane segment at I879–L899 threads the bilayer. The Lumenal portion of the chain corresponds to E900–N921. N909 is a glycosylation site (N-linked (GlcNAc...) asparagine).

It belongs to the PIGG/PIGN/PIGO family. PIGN subfamily.

The protein localises to the endoplasmic reticulum membrane. It functions in the pathway glycolipid biosynthesis; glycosylphosphatidylinositol-anchor biosynthesis. In terms of biological role, ethanolamine phosphate transferase involved in glycosylphosphatidylinositol-anchor biosynthesis. Transfers ethanolamine phosphate to the first alpha-1,4-linked mannose of the glycosylphosphatidylinositol precursor of GPI-anchor. This chain is GPI ethanolamine phosphate transferase 1 (MCD4), found in Candida glabrata (strain ATCC 2001 / BCRC 20586 / JCM 3761 / NBRC 0622 / NRRL Y-65 / CBS 138) (Yeast).